Here is a 297-residue protein sequence, read N- to C-terminus: Acetaldehyde dehydrogenase (297 aa).

Position 18–21 (18–21 (TGNI)) interacts with NAD(+). C133 (acyl-thioester intermediate) is an active-site residue. Residues 165 to 173 (SAGPATRLN) and N275 each bind NAD(+).

Belongs to the acetaldehyde dehydrogenase family.

It catalyses the reaction acetaldehyde + NAD(+) + CoA = acetyl-CoA + NADH + H(+). This Spirochaeta aurantia protein is Acetaldehyde dehydrogenase.